Reading from the N-terminus, the 87-residue chain is MKTKLNELLEFPCPFTYKVMGIAQPELVDQVVEVVQRHAPGDYSPQVKPSSKGNYHSVSITITATHIEQVETLYEELGKIDIVRMVL.

The protein belongs to the UPF0250 family.

The chain is UPF0250 protein SG0794 from Sodalis glossinidius (strain morsitans).